The sequence spans 422 residues: Probable FBD-associated F-box protein At1g32375 (422 aa).

One can recognise an F-box domain in the interval 1-53 (MDKLSQLPEALLVRILSLLSAKDVVSTMVLSKRWQFLWMLVPKLIYDDSYQAI). An FBD domain is found at 342-392 (CWNEPSAVPECLLTSLETLEWVKYEGTEEEKEVAAFILRSGSCLKKVTISS).

This Arabidopsis thaliana (Mouse-ear cress) protein is Probable FBD-associated F-box protein At1g32375.